Here is a 351-residue protein sequence, read N- to C-terminus: Carbamoyl phosphate synthase small chain (351 aa).

The segment at Met-1–Lys-171 is CPSase. Residues Ser-45, Gly-219, and Gly-221 each coordinate L-glutamine. A Glutamine amidotransferase type-1 domain is found at Lys-171–Leu-351. Cys-246 functions as the Nucleophile in the catalytic mechanism. Positions 247, 250, 288, 290, and 291 each coordinate L-glutamine. Catalysis depends on residues His-331 and Glu-333.

Belongs to the CarA family. In terms of assembly, composed of two chains; the small (or glutamine) chain promotes the hydrolysis of glutamine to ammonia, which is used by the large (or ammonia) chain to synthesize carbamoyl phosphate. Tetramer of heterodimers (alpha,beta)4.

The enzyme catalyses hydrogencarbonate + L-glutamine + 2 ATP + H2O = carbamoyl phosphate + L-glutamate + 2 ADP + phosphate + 2 H(+). The catalysed reaction is L-glutamine + H2O = L-glutamate + NH4(+). It participates in amino-acid biosynthesis; L-arginine biosynthesis; carbamoyl phosphate from bicarbonate: step 1/1. Its pathway is pyrimidine metabolism; UMP biosynthesis via de novo pathway; (S)-dihydroorotate from bicarbonate: step 1/3. Small subunit of the glutamine-dependent carbamoyl phosphate synthetase (CPSase). CPSase catalyzes the formation of carbamoyl phosphate from the ammonia moiety of glutamine, carbonate, and phosphate donated by ATP, constituting the first step of 2 biosynthetic pathways, one leading to arginine and/or urea and the other to pyrimidine nucleotides. The small subunit (glutamine amidotransferase) binds and cleaves glutamine to supply the large subunit with the substrate ammonia. The polypeptide is Carbamoyl phosphate synthase small chain (Clostridium acetobutylicum (strain ATCC 824 / DSM 792 / JCM 1419 / IAM 19013 / LMG 5710 / NBRC 13948 / NRRL B-527 / VKM B-1787 / 2291 / W)).